The chain runs to 928 residues: Isoleucine--tRNA ligase (928 aa).

The 'HIGH' region signature appears at proline 57–histidine 67. Glutamate 552 is an L-isoleucyl-5'-AMP binding site. The short motif at lysine 593–serine 597 is the 'KMSKS' region element. Lysine 596 lines the ATP pocket. Zn(2+) is bound by residues cysteine 887, cysteine 890, cysteine 907, and cysteine 910.

The protein belongs to the class-I aminoacyl-tRNA synthetase family. IleS type 1 subfamily. As to quaternary structure, monomer. Zn(2+) is required as a cofactor.

The protein localises to the cytoplasm. It carries out the reaction tRNA(Ile) + L-isoleucine + ATP = L-isoleucyl-tRNA(Ile) + AMP + diphosphate. Catalyzes the attachment of isoleucine to tRNA(Ile). As IleRS can inadvertently accommodate and process structurally similar amino acids such as valine, to avoid such errors it has two additional distinct tRNA(Ile)-dependent editing activities. One activity is designated as 'pretransfer' editing and involves the hydrolysis of activated Val-AMP. The other activity is designated 'posttransfer' editing and involves deacylation of mischarged Val-tRNA(Ile). This Lacticaseibacillus paracasei (strain ATCC 334 / BCRC 17002 / CCUG 31169 / CIP 107868 / KCTC 3260 / NRRL B-441) (Lactobacillus paracasei) protein is Isoleucine--tRNA ligase.